Consider the following 71-residue polypeptide: Peptide Ctri9819 (71 aa).

Positions 1 to 23 (MKTVSTVAILAIFLLIVITTIET) are cleaved as a signal peptide. Residue Leu-34 is modified to Leucine amide. Residues 38-71 (SKLETFKRIARTLSAGISAKRSLEDVNSLTGMSS) constitute a propeptide that is removed on maturation.

It belongs to the non-disulfide-bridged peptide (NDBP) superfamily. Short antimicrobial peptide (group 4) family. In terms of tissue distribution, expressed by the venom gland.

Its subcellular location is the secreted. Antimicrobial peptide. This is Peptide Ctri9819 from Chaerilus tricostatus (Scorpion).